A 278-amino-acid polypeptide reads, in one-letter code: MWSNMDDKKVKEEKILHNSTNKKIIRHEDFVAGISKGMAILDSFGTDRHRLNITMAAEKTGMTRAAARRHLLTLEYLGYLESDGHYFYLTPKILKFSGSYLGGAQLPKISQPLLNLLTTQTSLIYSVMVLDGYEAITIARSAAHQQTDRVNPYGLHLGNRLPAHATSAGKILLAYLDDHAQQEWLNQYPLQRLTKYTYTNNIDFLRLLSEIKEQGWCYSSEEHELGVHALAVPIYGQQSRVVAALNIVSPTMRTTKEYLIQHILPLLQETARELRNIL.

The HTH iclR-type domain occupies 31-91; it reads VAGISKGMAI…SDGHYFYLTP (61 aa). The H-T-H motif DNA-binding region spans 53–72; that stretch reads ITMAAEKTGMTRAAARRHLL. The IclR-ED domain maps to 106–278; the sequence is LPKISQPLLN…ETARELRNIL (173 aa).

Activates transcription of the pca operon. This Acinetobacter baylyi (strain ATCC 33305 / BD413 / ADP1) protein is Pca operon regulatory protein (pcaU).